The chain runs to 308 residues: Ava biosynthesis cluster protein O (308 aa).

It participates in secondary metabolite biosynthesis. Its function is as follows. Part of the cluster that mediates the biosynthesis of a highly modified cyclo-arginine-tryptophan dipeptide (cRW). The first step of the pathway is perfornmed by the arginine-containing cyclodipeptide synthase (RCPDS) avaA that acts as the scaffold-generating enzyme and is responsible for formation of the cyclo-Arg-Trp (cRW) diketopiperazine. AvaB then acts as a multifunctional flavoenzyme that is responsible for generating the cyclo-Arg-formylkynurenine DKP, which can be deformylated by avaC. AvaB then further catalyzes an additional N-oxidation followed by cyclization and dehydration. The next step is an N-acetylation of the guanidine group catalyzed by the arginine N-acetyltransferase avaD. The roles of the additional enzymes identified within the ava cluster still have to be determined. This Aspergillus versicolor protein is Ava biosynthesis cluster protein O.